A 60-amino-acid polypeptide reads, in one-letter code: Large ribosomal subunit protein bL32 (60 aa).

Positions 1-23 are disordered; it reads MAVPARHTSKAKKNKRRTHYKLT. Residues 7–20 show a composition bias toward basic residues; the sequence is HTSKAKKNKRRTHY.

Belongs to the bacterial ribosomal protein bL32 family.

The protein is Large ribosomal subunit protein bL32 of Streptococcus equi subsp. equi (strain 4047).